Reading from the N-terminus, the 476-residue chain is MNFETVIGLEVHVELKTESKIFSASPNHFGAEPNANTSVIDLGYPGVLPVLNKAAVEFAMKAAMALNCEVATDTKFDRKNYFYPDNPKAYQISQFDKPIGENGWIEIEVDGTKKKIGITRLHLEEDAGKLTHSGNGYSLVDFNRQGTPLIEIVSEPDIRTPQEAYAYLEKLKSIIQYTGVSDCKMEEGSLRCDANISLRPVGQEEFGTKTELKNLNSFNFVRKGLEYEEKRQAQVLLSGGEILQETRRYDEAANKTVLMRVKEGSDDYRYFPEPDLVALHIDDEWKARIRSEIPELPDARKKRYVEELGLPAYDAMVLTLTKEMSDFFEETIAKGADPKLASNWLMGEVSGYLNAEQKELDEVALTPDGLAKMIQLIEKGTISSKIAKKVFKDLIEKGGDPEEIVKAKGLVQISDEGELRKYVVEVLDNNQQSIDDFKNGKDRAIGFLVGQIMKATKGKANPPMVNKLLLEEINKR.

The protein belongs to the GatB/GatE family. GatB subfamily. Heterotrimer of A, B and C subunits.

It catalyses the reaction L-glutamyl-tRNA(Gln) + L-glutamine + ATP + H2O = L-glutaminyl-tRNA(Gln) + L-glutamate + ADP + phosphate + H(+). The catalysed reaction is L-aspartyl-tRNA(Asn) + L-glutamine + ATP + H2O = L-asparaginyl-tRNA(Asn) + L-glutamate + ADP + phosphate + 2 H(+). In terms of biological role, allows the formation of correctly charged Asn-tRNA(Asn) or Gln-tRNA(Gln) through the transamidation of misacylated Asp-tRNA(Asn) or Glu-tRNA(Gln) in organisms which lack either or both of asparaginyl-tRNA or glutaminyl-tRNA synthetases. The reaction takes place in the presence of glutamine and ATP through an activated phospho-Asp-tRNA(Asn) or phospho-Glu-tRNA(Gln). In Halalkalibacterium halodurans (strain ATCC BAA-125 / DSM 18197 / FERM 7344 / JCM 9153 / C-125) (Bacillus halodurans), this protein is Aspartyl/glutamyl-tRNA(Asn/Gln) amidotransferase subunit B (gatB).